We begin with the raw amino-acid sequence, 488 residues long: Glutamyl-tRNA(Gln) amidotransferase subunit A (488 aa).

Residues K77 and S152 each act as charge relay system in the active site. S176 (acyl-ester intermediate) is an active-site residue.

The protein belongs to the amidase family. GatA subfamily. Heterotrimer of A, B and C subunits.

It carries out the reaction L-glutamyl-tRNA(Gln) + L-glutamine + ATP + H2O = L-glutaminyl-tRNA(Gln) + L-glutamate + ADP + phosphate + H(+). Functionally, allows the formation of correctly charged Gln-tRNA(Gln) through the transamidation of misacylated Glu-tRNA(Gln) in organisms which lack glutaminyl-tRNA synthetase. The reaction takes place in the presence of glutamine and ATP through an activated gamma-phospho-Glu-tRNA(Gln). This Streptococcus suis (strain 05ZYH33) protein is Glutamyl-tRNA(Gln) amidotransferase subunit A.